A 766-amino-acid polypeptide reads, in one-letter code: Serine/threonine-protein kinase B-raf (766 aa).

Residues 1 to 13 (MAALSGGGGGGAE) show a composition bias toward gly residues. Residues 1 to 38 (MAALSGGGGGGAEPGQALFNGDMEPEAGAGAGAAASSA) are disordered. Ala-2 is modified (N-acetylalanine). Residue Ser-151 is modified to Phosphoserine. The region spanning 155-227 (PIVRVFLPNK…TGEELHVEVL (73 aa)) is the RBD domain. The segment at 234 to 280 (THNFVRKTFFTLAFCDFCRKLLFQGFRCQTCGYKFHQRCSTEVPLMC) adopts a Phorbol-ester/DAG-type zinc-finger fold. Zn(2+) is bound by residues His-235, Cys-248, Cys-251, Cys-261, Cys-264, His-269, Cys-272, and Cys-280. Residues 308-454 (AETALTSGSS…DSSDDWEIPD (147 aa)) are disordered. The segment covering 314-341 (SGSSPSAPASDSIGPQILTSPSPSKSIP) has biased composition (low complexity). Ser-333 carries the phosphoserine modification. The span at 348 to 363 (PADEDHRNQFGQRDRS) shows a compositional bias: basic and acidic residues. Ser-365 is subject to Phosphoserine; by SGK1. The residue at position 373 (Thr-373) is a Phosphothreonine; by autocatalysis. Phosphothreonine is present on Thr-396. Ser-399 bears the Phosphoserine mark. Thr-401 is modified (phosphothreonine). Over residues 423–447 (QRERKSSSSSEDRNRMKTLGRRDSS) the composition is skewed to basic and acidic residues. Residues Ser-446 and Ser-447 each carry the phosphoserine modification. The Protein kinase domain occupies 457–717 (ITVGQRIGSG…PQILASIELL (261 aa)). Residues 463 to 471 (IGSGSFGTV) and Lys-483 contribute to the ATP site. Catalysis depends on Asp-576, which acts as the Proton acceptor. Lys-578 participates in a covalent cross-link: Glycyl lysine isopeptide (Lys-Gly) (interchain with G-Cter in ubiquitin). At Arg-671 the chain carries Omega-N-methylarginine; by PRMT5. Phosphoserine occurs at positions 729 and 750. Phosphothreonine; by MAPK1 is present on Thr-753.

This sequence belongs to the protein kinase superfamily. TKL Ser/Thr protein kinase family. RAF subfamily. In terms of assembly, monomer. Homodimer. Heterodimerizes with RAF1, and the heterodimer possesses a highly increased kinase activity compared to the respective homodimers or monomers. Heterodimerization is mitogen-regulated and enhanced by 14-3-3 proteins. MAPK1/ERK2 activation can induce a negative feedback that promotes the dissociation of the heterodimer by phosphorylating BRAF at Thr-753. Heterodimerizes (via N-terminus) with KSR1 (via N-terminus) or KSR2 (via N-terminus) in a MAP2K1-dependent manner. Interacts with MAP2K1 and MAP2K2. Found in a complex with at least BRAF, HRAS, MAP2K1, MAPK3 and RGS14. Interacts with RIT1. Interacts (via N-terminus) with RGS14 (via RBD domains); the interaction mediates the formation of a ternary complex with RAF1, a ternary complex inhibited by GNAI1. Interacts with DGKH. Interacts with PRMT5. Interacts with KSR2. Interacts with AKAP13, MAP2K1 and KSR1. Identified in a complex with AKAP13, MAP2K1 and KSR1. Interacts with FNIP1 and FNIP2. Zn(2+) serves as cofactor. Phosphorylation at Ser-365 by SGK1 inhibits its activity. Phosphorylation at Thr-753 by MAPK1. Dephosphorylation of Ser-365 by the SHOC2-MRAS-PP1c (SMP) complex consisting of SHOC2, GTP-bound M-Ras/MRAS and the catalytic subunit of protein phosphatase 1 (PPP1CA, PPP1CB or PPP1CC); this relieves inactivation and stimulates kinase activity. In terms of processing, methylation at Arg-671 decreases stability and kinase activity. Post-translationally, ubiquitinated by RNF149; which leads to proteasomal degradation. Polyubiquitinated at Lys-578 in response to EGF. As to expression, brain and testis.

Its subcellular location is the nucleus. It is found in the cytoplasm. The protein resides in the cell membrane. The enzyme catalyses L-seryl-[protein] + ATP = O-phospho-L-seryl-[protein] + ADP + H(+). It catalyses the reaction L-threonyl-[protein] + ATP = O-phospho-L-threonyl-[protein] + ADP + H(+). Its activity is regulated as follows. In quiescent cells, maintained in an inactive state via an intramolecular interaction between the protein kinase and N-terminal domains. Following mitogen-mediated cell activation, binds via its RGB domain to active HRAS (GTP-bound) which releases the inhibitory intramolecular interaction between the two domains. This allows the MAP2K1-mediated dimerization of KSR1 or KSR2, and BRAF which activates BRAF. In terms of biological role, protein kinase involved in the transduction of mitogenic signals from the cell membrane to the nucleus. Phosphorylates MAP2K1, and thereby activates the MAP kinase signal transduction pathway. Phosphorylates PFKFB2. May play a role in the postsynaptic responses of hippocampal neurons. This is Serine/threonine-protein kinase B-raf from Homo sapiens (Human).